The sequence spans 152 residues: MTITDLVLILFIAALLAFAIYDQFIMPRRNGPTLLAIPLLRRGRIDSVIFVGLIVILIYNNVTNHGALITTWLLSALALMGFYIFWIRVPKIIFKQKGFFFANVWIEYSRIKAMNLSEDGVLVMQLEQRRLLIRVRNIDDLERIYKLLVSTQ.

A run of 3 helical transmembrane segments spans residues 6–26 (LVLI…QFIM), 45–65 (IDSV…VTNH), and 67–87 (ALIT…IFWI).

The protein belongs to the UPF0266 family.

Its subcellular location is the cell inner membrane. The protein is UPF0266 membrane protein YobD of Escherichia coli O157:H7 (strain EC4115 / EHEC).